The following is a 159-amino-acid chain: Alpha-lactalbumin (159 aa).

The first 19 residues, 1–19 (MMRFVPLFLACISLPAFQA), serve as a signal peptide directing secretion. The C-type lysozyme domain maps to 20-142 (TEFTKCEVSH…KLEQWRCEKP (123 aa)). 4 disulfide bridges follow: Cys25/Cys139, Cys47/Cys130, Cys80/Cys96, and Cys92/Cys110. Asn64 carries N-linked (GlcNAc...) asparagine glycosylation. Ca(2+) is bound by residues Lys98, Asp101, Asp106, and Asp107.

The protein belongs to the glycosyl hydrolase 22 family. In terms of assembly, lactose synthase (LS) is a heterodimer of a catalytic component, beta1,4-galactosyltransferase (beta4Gal-T1) and a regulatory component, alpha-lactalbumin (LA). In terms of tissue distribution, mammary gland specific. Secreted in milk.

The protein resides in the secreted. Functionally, regulatory subunit of lactose synthase, changes the substrate specificity of galactosyltransferase in the mammary gland making glucose a good acceptor substrate for this enzyme. This enables LS to synthesize lactose, the major carbohydrate component of milk. In other tissues, galactosyltransferase transfers galactose onto the N-acetylglucosamine of the oligosaccharide chains in glycoproteins. In Rattus norvegicus (Rat), this protein is Alpha-lactalbumin (Lalba).